The chain runs to 42 residues: Potassium channel toxin gamma-KTx 1.8 (42 aa).

4 cysteine pairs are disulfide-bonded: Cys-5–Cys-23, Cys-11–Cys-34, Cys-20–Cys-39, and Cys-24–Cys-41.

This sequence belongs to the ergtoxin family. Gamma-KTx 1 subfamily. As to expression, expressed by the venom gland.

It is found in the secreted. In terms of biological role, blocks in a reversible manner human and rat Kv11.1/KCNH2/ERG1 potassium channels. Also completely and irreversibly blocks rat Kv11.2/KCNH6/ERG2 and human Kv11.3/KCNH7/ERG3 channels. Also weakly inhibits Kir2.1/KCNJ2 and Kv1.2/KCNA2 potassium channels. The sequence is that of Potassium channel toxin gamma-KTx 1.8 from Centruroides elegans (Bark scorpion).